Consider the following 567-residue polypeptide: Beta-galactoside-specific lectin 2 (567 aa).

Residues 1-33 form the signal peptide; the sequence is MNARLASSRAWVWCFLMVGLVCGATAKAESKIN. Asparagine 145 carries an N-linked (GlcNAc...) asparagine glycan. Glutamate 198 is an active-site residue. Cystine bridges form between cysteine 280–cysteine 306 and cysteine 322–cysteine 341. A propeptide spans 288 to 301 (connecting peptide); the sequence is DVHNWPLVIRPVMV. Residues 309–439 enclose the Ricin B-type lectin 1 domain; sequence SEPTVRIVGR…DSLGQSWLAS (131 aa). D-galactose is bound at residue 324 to 326; the sequence is DVR. An N-linked (GlcNAc...) asparagine glycan is attached at asparagine 362. Cysteines 365 and 382 form a disulfide. Residue asparagine 440 is glycosylated (N-linked (GlcNAc...) asparagine). The 124-residue stretch at 443-566 folds into the Ricin B-type lectin 2 domain; the sequence is APREVTIYGF…GNPNQMWLPV (124 aa). 2 disulfide bridges follow: cysteine 456/cysteine 469 and cysteine 495/cysteine 512. A D-galactose-binding site is contributed by 539–541; sequence DVR.

Belongs to the ribosome-inactivating protein family. Type 2 RIP subfamily. Disulfide-linked dimer of A and B chains.

It catalyses the reaction Endohydrolysis of the N-glycosidic bond at one specific adenosine on the 28S rRNA.. In terms of biological role, the A chain is responsible for inhibiting protein synthesis through the catalytic inactivation of 60S ribosomal subunits by removing adenine from position 4,324 of 28S rRNA. The B chain binds to cell receptors and probably facilitates the entry into the cell of the A chain; B chains are also responsible for cell agglutination (lectin activity). This Viscum album (European mistletoe) protein is Beta-galactoside-specific lectin 2.